Here is a 567-residue protein sequence, read N- to C-terminus: Septation ring formation regulator EzrA (567 aa).

Residues 1–2 (ME) lie on the Extracellular side of the membrane. A helical membrane pass occupies residues 3 to 21 (IAVIVLLLLGGVMIYNHVY). The Cytoplasmic portion of the chain corresponds to 22 to 567 (RKKMYSEIDR…IFRDERSKEE (546 aa)). 2 coiled-coil regions span residues 97–188 (RYAK…LTAS) and 254–465 (REIV…LEEK).

The protein belongs to the EzrA family.

It is found in the cell membrane. In terms of biological role, negative regulator of FtsZ ring formation; modulates the frequency and position of FtsZ ring formation. Inhibits FtsZ ring formation at polar sites. Interacts either with FtsZ or with one of its binding partners to promote depolymerization. In Geobacillus sp. (strain WCH70), this protein is Septation ring formation regulator EzrA.